A 486-amino-acid chain; its full sequence is Ribulose bisphosphate carboxylase large chain (486 aa).

Positions 1–2 (MS) are excised as a propeptide. Residues asparagine 123 and threonine 173 each coordinate substrate. The active-site Proton acceptor is the lysine 175. Lysine 177 provides a ligand contact to substrate. The Mg(2+) site is built by lysine 201, aspartate 203, and glutamate 204. Lysine 201 carries the N6-carboxylysine modification. Position 208 is a phosphoserine (serine 208). Residue histidine 294 is the Proton acceptor of the active site. Positions 295 and 327 each coordinate substrate. Threonine 330 bears the Phosphothreonine mark. Serine 379 lines the substrate pocket.

This sequence belongs to the RuBisCO large chain family. Type I subfamily. Heterohexadecamer of 8 large chains and 8 small chains; disulfide-linked. The disulfide link is formed within the large subunit homodimers. The cofactor is Mg(2+). In terms of processing, the disulfide bond which can form in the large chain dimeric partners within the hexadecamer appears to be associated with oxidative stress and protein turnover.

The protein resides in the plastid. It is found in the chloroplast. The enzyme catalyses 2 (2R)-3-phosphoglycerate + 2 H(+) = D-ribulose 1,5-bisphosphate + CO2 + H2O. It carries out the reaction D-ribulose 1,5-bisphosphate + O2 = 2-phosphoglycolate + (2R)-3-phosphoglycerate + 2 H(+). In terms of biological role, ruBisCO catalyzes two reactions: the carboxylation of D-ribulose 1,5-bisphosphate, the primary event in carbon dioxide fixation, as well as the oxidative fragmentation of the pentose substrate in the photorespiration process. Both reactions occur simultaneously and in competition at the same active site. In Aethionema grandiflorum (Persian stone-cress), this protein is Ribulose bisphosphate carboxylase large chain.